Consider the following 141-residue polypeptide: Large ribosomal subunit protein uL11 (141 aa).

Belongs to the universal ribosomal protein uL11 family. As to quaternary structure, part of the ribosomal stalk of the 50S ribosomal subunit. Interacts with L10 and the large rRNA to form the base of the stalk. L10 forms an elongated spine to which L12 dimers bind in a sequential fashion forming a multimeric L10(L12)X complex. Post-translationally, one or more lysine residues are methylated.

Functionally, forms part of the ribosomal stalk which helps the ribosome interact with GTP-bound translation factors. This chain is Large ribosomal subunit protein uL11, found in Chlorobium phaeobacteroides (strain DSM 266 / SMG 266 / 2430).